The following is a 522-amino-acid chain: Maturase K (522 aa).

It belongs to the intron maturase 2 family. MatK subfamily.

The protein resides in the plastid. Its subcellular location is the chloroplast. Usually encoded in the trnK tRNA gene intron. Probably assists in splicing its own and other chloroplast group II introns. The sequence is that of Maturase K from Pillansia templemannii.